The primary structure comprises 542 residues: Malate synthase, glyoxysomal (542 aa).

Arg-168 serves as the catalytic Proton acceptor. Asp-449 serves as the catalytic Proton donor. The Microbody targeting signal signature appears at Ser-540 to Leu-542.

Belongs to the malate synthase family.

The protein localises to the glyoxysome. The enzyme catalyses glyoxylate + acetyl-CoA + H2O = (S)-malate + CoA + H(+). The protein operates within carbohydrate metabolism; glyoxylate cycle; (S)-malate from isocitrate: step 2/2. The sequence is that of Malate synthase, glyoxysomal (acu-9) from Neurospora crassa (strain ATCC 24698 / 74-OR23-1A / CBS 708.71 / DSM 1257 / FGSC 987).